A 33-amino-acid polypeptide reads, in one-letter code: Cytochrome b6-f complex subunit 8 (33 aa).

The helical transmembrane segment at 2–22 threads the bilayer; that stretch reads LFTVAWASLAAMFSFSIAMVV.

It belongs to the PetN family. As to quaternary structure, the 4 large subunits of the cytochrome b6-f complex are cytochrome b6, subunit IV (17 kDa polypeptide, PetD), cytochrome f and the Rieske protein, while the 4 small subunits are PetG, PetL, PetM and PetN. The complex functions as a dimer.

It localises to the cellular thylakoid membrane. Functionally, component of the cytochrome b6-f complex, which mediates electron transfer between photosystem II (PSII) and photosystem I (PSI), cyclic electron flow around PSI, and state transitions. The polypeptide is Cytochrome b6-f complex subunit 8 (Synechococcus sp. (strain CC9902)).